Consider the following 475-residue polypeptide: 7-dehydrocholesterol reductase (475 aa).

The disordered stretch occupies residues 1-21 (MAAKSQPSAPKTKSTSGLTNG). Ser14 carries the post-translational modification Phosphoserine. Helical transmembrane passes span 40–60 (LASV…FIMA), 151–173 (WLLT…PTII), 178–200 (IPLL…VKGY), 266–286 (VTNS…DFFW), 306–326 (LGWG…LYLV), and 331–351 (QLPT…YYIF). Residues Lys358, Arg362, Leu395, Trp400, and 407-408 (NY) each bind NADP(+). Residues 420–440 (LACGGGHLLPYFYIIFMAILL) traverse the membrane as a helical segment. Residues Asp447, 451 to 455 (CANKY), and Tyr462 contribute to the NADP(+) site.

It belongs to the ERG4/ERG24 family. Interacts with DHCR24; this interaction regulates DHCR7 activity. Interacts with TMEM147.

It is found in the endoplasmic reticulum membrane. The enzyme catalyses cholesterol + NADP(+) = 7-dehydrocholesterol + NADPH + H(+). It catalyses the reaction 7-dehydrodesmosterol + NADPH + H(+) = desmosterol + NADP(+). It carries out the reaction 5,6alpha-epoxy-5alpha-cholestan-3beta-ol + H2O = 5alpha-cholestane-3beta,5,6beta-triol. The catalysed reaction is 5,6beta-epoxy-5beta-cholestan-3beta-ol + H2O = 5alpha-cholestane-3beta,5,6beta-triol. It participates in steroid biosynthesis; cholesterol biosynthesis. In terms of biological role, oxidoreductase that catalyzes the last step of the cholesterol synthesis pathway, which transforms cholesta-5,7-dien-3beta-ol (7-dehydrocholesterol,7-DHC) into cholesterol by reducing the C7-C8 double bond of its sterol core. Can also metabolize cholesta-5,7,24-trien-3beta-ol (7-dehydrodemosterol, 7-DHD) to desmosterol, which is then metabolized by the Delta(24)-sterol reductase (DHCR24) to cholesterol. Modulates ferroptosis (a form of regulated cell death driven by iron-dependent lipid peroxidation) through the metabolic breakdown of the anti-ferroptotic metabolites 7-DHC and 7-DHD which, when accumulated, divert the propagation of peroxyl radical-mediated damage from phospholipid components to its sterol core, protecting plasma and mitochondrial membranes from phospholipid autoxidation. Functionally, component of the microsomal antiestrogen binding site (AEBS), a multiproteic complex at the ER membrane that consists of an association between cholestenol Delta-isomerase/EBP and DHCR7. This complex is responsible for cholesterol-5,6-epoxide hydrolase (ChEH) activity, which consists in the hydration of cholesterol-5,6-epoxides (5,6-EC) into cholestane-3beta,5alpha,6beta-triol (CT). The precise role of each component of this complex has not been described yet. This chain is 7-dehydrocholesterol reductase (DHCR7), found in Bos taurus (Bovine).